A 157-amino-acid polypeptide reads, in one-letter code: NudC domain-containing protein 2 (157 aa).

An N-acetylserine modification is found at Ser2. One can recognise a CS domain in the interval 14–104; sequence CATPWGQWYQ…DAANCWTSLL (91 aa). The tract at residues 134–157 is disordered; the sequence is FDFSGAEISGNYTKGGPDFSNLEK. Ser142 bears the Phosphoserine mark. Tyr145 carries the phosphotyrosine modification.

In terms of assembly, interacts with LIS1.

The protein localises to the chromosome. The protein resides in the centromere. It localises to the kinetochore. Its subcellular location is the cytoplasm. It is found in the cytoskeleton. The protein localises to the microtubule organizing center. The protein resides in the centrosome. It localises to the spindle pole. Its function is as follows. May regulate the LIS1/dynein pathway by stabilizing LIS1 with Hsp90 chaperone. The chain is NudC domain-containing protein 2 (Nudcd2) from Rattus norvegicus (Rat).